A 777-amino-acid chain; its full sequence is Isoamylase (777 aa).

Positions 1–32 (MDPHAPQRQRSGQRLRALALAALACALSPAHA) are cleaved as a signal peptide. Residues aspartate 162, glutamate 263, threonine 264, asparagine 266, and aspartate 293 each contribute to the Ca(2+) site. The active-site Nucleophile is aspartate 410. A disulfide bond links cysteine 419 and cysteine 423. The active-site Proton donor is the glutamate 458.

Belongs to the glycosyl hydrolase 13 family. In terms of assembly, monomer. It depends on Ca(2+) as a cofactor.

It catalyses the reaction Hydrolysis of (1-&gt;6)-alpha-D-glucosidic branch linkages in glycogen, amylopectin and their beta-limit dextrins.. Functionally, has a high rate of hydrolysis for glycogen. Does not cleave pullulan. In Flavobacterium sp, this protein is Isoamylase (iam).